The sequence spans 477 residues: V-type ATP synthase beta chain (477 aa).

This sequence belongs to the ATPase alpha/beta chains family.

Its function is as follows. Produces ATP from ADP in the presence of a proton gradient across the membrane. The V-type beta chain is a regulatory subunit. The sequence is that of V-type ATP synthase beta chain from Anaeromyxobacter sp. (strain K).